The sequence spans 203 residues: LexA repressor (203 aa).

Residues 30 to 50 constitute a DNA-binding region (H-T-H motif); sequence VREICQAVSLKSTSTVHGHLK. Residues Ser127 and Lys164 each act as for autocatalytic cleavage activity in the active site.

The protein belongs to the peptidase S24 family. In terms of assembly, homodimer.

The catalysed reaction is Hydrolysis of Ala-|-Gly bond in repressor LexA.. In terms of biological role, represses a number of genes involved in the response to DNA damage (SOS response), including recA and lexA. In the presence of single-stranded DNA, RecA interacts with LexA causing an autocatalytic cleavage which disrupts the DNA-binding part of LexA, leading to derepression of the SOS regulon and eventually DNA repair. The protein is LexA repressor of Clostridium perfringens (strain SM101 / Type A).